The primary structure comprises 260 residues: Triosephosphate isomerase (260 aa).

11–13 provides a ligand contact to substrate; sequence NWK. The active-site Electrophile is the histidine 103. Catalysis depends on glutamate 175, which acts as the Proton acceptor. Substrate contacts are provided by residues glycine 181, serine 220, and 241–242; that span reads GG.

It belongs to the triosephosphate isomerase family. Homodimer.

It is found in the cytoplasm. The enzyme catalyses D-glyceraldehyde 3-phosphate = dihydroxyacetone phosphate. It functions in the pathway carbohydrate biosynthesis; gluconeogenesis. The protein operates within carbohydrate degradation; glycolysis; D-glyceraldehyde 3-phosphate from glycerone phosphate: step 1/1. Functionally, involved in the gluconeogenesis. Catalyzes stereospecifically the conversion of dihydroxyacetone phosphate (DHAP) to D-glyceraldehyde-3-phosphate (G3P). The polypeptide is Triosephosphate isomerase (Shewanella sp. (strain MR-7)).